A 336-amino-acid chain; its full sequence is Dihydroorotate dehydrogenase (quinone) (336 aa).

Residues Ala62–Lys66 and Thr86 contribute to the FMN site. Lys66 contributes to the substrate binding site. Asn111–Phe115 is a substrate binding site. FMN contacts are provided by Asn139 and Asn172. Position 172 (Asn172) interacts with substrate. Catalysis depends on Ser175, which acts as the Nucleophile. Asn177 serves as a coordination point for substrate. FMN contacts are provided by Lys217 and Thr245. Asn246–Thr247 is a substrate binding site. FMN contacts are provided by residues Gly268, Gly297, and Tyr318–Ser319.

Belongs to the dihydroorotate dehydrogenase family. Type 2 subfamily. As to quaternary structure, monomer. Requires FMN as cofactor.

It is found in the cell membrane. It carries out the reaction (S)-dihydroorotate + a quinone = orotate + a quinol. It participates in pyrimidine metabolism; UMP biosynthesis via de novo pathway; orotate from (S)-dihydroorotate (quinone route): step 1/1. Catalyzes the conversion of dihydroorotate to orotate with quinone as electron acceptor. The sequence is that of Dihydroorotate dehydrogenase (quinone) from Salmonella choleraesuis (strain SC-B67).